Reading from the N-terminus, the 529-residue chain is DNA polymerase lambda (529 aa).

One can recognise a BRCT domain in the interval 14–109 (DPEGMFAGMV…EKANEDLYVL (96 aa)). Residues 119-199 (PKKSLPAISG…ESTSVYKPPD (81 aa)) are disordered. Polar residues predominate over residues 153–175 (SHSNTQGSPDSPTSCSVPSTSAS). Residues 182-193 (ETPTSPQSESTS) show a composition bias toward low complexity. Residues 213–227 (NIYRALGEDRRSFSY) form a DNA-binding region. Residue His-260 is part of the active site. The tract at residues 295-298 (GPAT) is DNA-binding. Residues Arg-336, 367–370 (SYRR), and 376–379 (GDLD) contribute to the dCTP site. The tract at residues 370-379 (RGKATCGDLD) is involved in primer binding. Asp-377, Asp-379, and Asp-444 together coordinate Mn(2+). The tract at residues 418–459 (EEGTDSGVDTYFGLCTYPGQELRRRIDFKVYPRDIYSFGLIA) is DNA-binding. Asn-467 provides a ligand contact to dCTP.

Belongs to the DNA polymerase type-X family. As to quaternary structure, interacts with the DNA repair proteins XRCC4 and LIG4. Interacts with HSP90-1. Requires Mn(2+) as cofactor.

It localises to the nucleus. It carries out the reaction DNA(n) + a 2'-deoxyribonucleoside 5'-triphosphate = DNA(n+1) + diphosphate. In terms of biological role, repair polymerase involved in base excision repair (BER) and responsible for repair of lesions that give rise to abasic (AP) sites in DNA. Has both DNA polymerase and terminal transferase activities. Has a 5'-deoxyribose-5-phosphate lyase (dRP lyase) activity. Involved in the repair of transposon-induced DNA double strand breaks (DSBs). Involved in repair of UV-B-mediated DNA damage during seedling development through an excision repair mechanism. Involved the repair of DSBs induced by high salinity and DNA cross-linking agent. Functions via the DNA non-homologous end joining (NHEJ) pathway. The protein is DNA polymerase lambda of Arabidopsis thaliana (Mouse-ear cress).